Here is a 504-residue protein sequence, read N- to C-terminus: Histidine--tRNA ligase (504 aa).

This sequence belongs to the class-II aminoacyl-tRNA synthetase family. In terms of assembly, homodimer.

It is found in the cytoplasm. The catalysed reaction is tRNA(His) + L-histidine + ATP = L-histidyl-tRNA(His) + AMP + diphosphate + H(+). This Rhizobium rhizogenes (strain K84 / ATCC BAA-868) (Agrobacterium radiobacter) protein is Histidine--tRNA ligase.